A 342-amino-acid polypeptide reads, in one-letter code: N-acetyl-gamma-glutamyl-phosphate reductase (342 aa).

The active site involves cysteine 149.

This sequence belongs to the NAGSA dehydrogenase family. Type 1 subfamily.

The protein resides in the cytoplasm. The enzyme catalyses N-acetyl-L-glutamate 5-semialdehyde + phosphate + NADP(+) = N-acetyl-L-glutamyl 5-phosphate + NADPH + H(+). It participates in amino-acid biosynthesis; L-arginine biosynthesis; N(2)-acetyl-L-ornithine from L-glutamate: step 3/4. In terms of biological role, catalyzes the NADPH-dependent reduction of N-acetyl-5-glutamyl phosphate to yield N-acetyl-L-glutamate 5-semialdehyde. This Cereibacter sphaeroides (strain KD131 / KCTC 12085) (Rhodobacter sphaeroides) protein is N-acetyl-gamma-glutamyl-phosphate reductase.